We begin with the raw amino-acid sequence, 420 residues long: Probable glucuronosyltransferase Os04g0398600 (420 aa).

Residues 1–4 (MGSR) lie on the Cytoplasmic side of the membrane. A helical; Signal-anchor for type II membrane protein transmembrane segment spans residues 5–25 (TVGWWLLAAAVVLAAAAADSG). Residues 26–420 (EAERAAEQHS…AGPVGDLKAW (395 aa)) lie on the Lumenal side of the membrane. Residues Asn-147 and Asn-408 are each glycosylated (N-linked (GlcNAc...) asparagine).

This sequence belongs to the glycosyltransferase 47 family.

It localises to the golgi apparatus membrane. Functionally, involved in the synthesis of glucuronoxylan hemicellulose in secondary cell walls. The sequence is that of Probable glucuronosyltransferase Os04g0398600 from Oryza sativa subsp. japonica (Rice).